The following is a 176-amino-acid chain: RNA pyrophosphohydrolase (176 aa).

Residues 6 to 149 (GYRPNVGIIL…KRQVYQQALF (144 aa)) enclose the Nudix hydrolase domain. The short motif at 38–59 (GGIKHGESPEQAMFRELFEEVG) is the Nudix box element.

It belongs to the Nudix hydrolase family. RppH subfamily. Requires a divalent metal cation as cofactor.

In terms of biological role, accelerates the degradation of transcripts by removing pyrophosphate from the 5'-end of triphosphorylated RNA, leading to a more labile monophosphorylated state that can stimulate subsequent ribonuclease cleavage. This is RNA pyrophosphohydrolase from Aromatoleum aromaticum (strain DSM 19018 / LMG 30748 / EbN1) (Azoarcus sp. (strain EbN1)).